The following is a 209-amino-acid chain: Thymidine kinase (209 aa).

ATP-binding positions include Ala9–Ser16 and Asp88–Gln91. Glu89 (proton acceptor) is an active-site residue. Cys146, Cys148, Cys183, and His186 together coordinate Zn(2+).

This sequence belongs to the thymidine kinase family. As to quaternary structure, homotetramer.

The protein resides in the cytoplasm. The catalysed reaction is thymidine + ATP = dTMP + ADP + H(+). This Legionella pneumophila (strain Lens) protein is Thymidine kinase.